We begin with the raw amino-acid sequence, 724 residues long: Protein-glutamine gamma-glutamyltransferase 5 (724 aa).

A2 bears the N-acetylalanine mark. Catalysis depends on residues C283, H342, and D365. Residues N405, D407, E453, and E458 each contribute to the Ca(2+) site. Composition is skewed to polar residues over residues 473 to 486 and 495 to 505; these read RSQG…NPFS and ARSPDSPSLQP. The disordered stretch occupies residues 473-505; that stretch reads RSQGPHQANSNPFSSVPPRHNSARSPDSPSLQP.

This sequence belongs to the transglutaminase superfamily. Transglutaminase family. The cofactor is Ca(2+).

The protein localises to the cytoplasm. The enzyme catalyses L-glutaminyl-[protein] + L-lysyl-[protein] = [protein]-L-lysyl-N(6)-5-L-glutamyl-[protein] + NH4(+). Its function is as follows. Catalyzes the cross-linking of proteins and the conjugation of polyamines to proteins. Contributes to the formation of the cornified cell envelope of keratinocytes. The polypeptide is Protein-glutamine gamma-glutamyltransferase 5 (Tgm5) (Mus musculus (Mouse)).